The chain runs to 590 residues: Leucine-rich repeat transmembrane neuronal protein 4 (590 aa).

The N-terminal stretch at 1-30 is a signal peptide; it reads MGFRLITQLKGMSVLLVLFPTLLLVMLTGA. The region spanning 31–59 is the LRRNT domain; sequence QRACPKNCRCDGKIVYCESHAFADIPENI. Residues 31-424 lie on the Extracellular side of the membrane; sequence QRACPKNCRC…HEYEHVSFHK (394 aa). N58 is a glycosylation site (N-linked (GlcNAc...) asparagine). LRR repeat units follow at residues 60–83, 84–107, 108–131, 132–155, 157–179, 180–203, 205–227, 228–251, 252–275, and 276–299; these read SGGS…QFAG, LNQL…AFQG, IRRL…TFHP, VPNL…QFKG, RKLI…VFQD, CRNL…AFAG, LKLK…HFPR, LFNL…LTWT, WSSL…TFKC, and LPNL…TVNA. An N-linked (GlcNAc...) asparagine glycan is attached at N126. The N-linked (GlcNAc...) asparagine glycan is linked to N291. The 52-residue stretch at 311–362 folds into the LRRCT domain; it reads NMWECSRSICPLFYWLKNFKGNKESTMICAGPKHIQGEKVSDAVETYNICSD. Residues 425–445 form a helical membrane-spanning segment; sequence IIAGSVALFLSVAMILLVIYV. Topologically, residues 446–590 are cytoplasmic; it reads SWKRYPASMK…PAIYLERITN (145 aa).

It belongs to the LRRTM family. In terms of assembly, peripherally associated with AMPAR complex. AMPAR complex consists of an inner core made of 4 pore-forming GluA/GRIA proteins (GRIA1, GRIA2, GRIA3 and GRIA4) and 4 major auxiliary subunits arranged in a twofold symmetry. One of the two pairs of distinct binding sites is occupied either by CNIH2, CNIH3 or CACNG2, CACNG3. The other harbors CACNG2, CACNG3, CACNG4, CACNG8 or GSG1L. This inner core of AMPAR complex is complemented by outer core constituents binding directly to the GluA/GRIA proteins at sites distinct from the interaction sites of the inner core constituents. Outer core constituents include at least PRRT1, PRRT2, CKAMP44/SHISA9, FRRS1L and NRN1. The proteins of the inner and outer core serve as a platform for other, more peripherally associated AMPAR constituents, including LRRTM4. Alone or in combination, these auxiliary subunits control the gating and pharmacology of the AMPAR complex and profoundly impact their biogenesis and protein processing. In terms of tissue distribution, expressed in the brain (at protein level).

The protein localises to the cell membrane. It is found in the postsynaptic cell membrane. Its function is as follows. May play a role in the development and maintenance of the nervous system. Exhibits strong synaptogenic activity, restricted to excitatory presynaptic differentiation. This is Leucine-rich repeat transmembrane neuronal protein 4 (Lrrtm4) from Rattus norvegicus (Rat).